Reading from the N-terminus, the 40-residue chain is Large ribosomal subunit protein bL36 (40 aa).

Belongs to the bacterial ribosomal protein bL36 family.

The polypeptide is Large ribosomal subunit protein bL36 (Corynebacterium jeikeium (strain K411)).